Here is a 671-residue protein sequence, read N- to C-terminus: Probable boron transporter 6 (671 aa).

The Cytoplasmic segment spans residues 1–37 (MKSEGESGPFQGILRDIEGRRKCYKQDWIRGIKTGIR). Residues 38–58 (ILAPTCYIFFASSLPVVAFGE) traverse the membrane as a helical segment. The Extracellular portion of the chain corresponds to 59 to 77 (QLSKHTGGALSAVETLAST). The helical transmembrane segment at 78–98 (SICGIIHAIFGGQPLLIVGVA) threads the bilayer. Residues 99–123 (EPTIIMYTYLYSFCISRPDIGRELY) are Cytoplasmic-facing. A helical transmembrane segment spans residues 124–144 (LAWVAWVCVWTSVLLILLSIF). Topologically, residues 145-157 (NAGTIITRFTRIA) are extracellular. The chain crosses the membrane as a helical span at residues 158–178 (GELFGMLIAVLFLQEAIKGLI). Topologically, residues 179–195 (SEFHAPEIKNQETGKSH) are cytoplasmic. Residues 196-216 (FLLIYANGLLAVIFSLGLLIT) form a helical membrane-spanning segment. Over 217-235 (ALKSRRAKSWKYGFGWLRS) the chain is Extracellular. Residues 236–256 (FIGDYGVPLMVLLWTALSYTV) traverse the membrane as a helical segment. Residues 257–291 (PSEVLPSVPRRLFCPLPWEPASLYHWTVVKDMGKV) are Cytoplasmic-facing. A helical membrane pass occupies residues 292–312 (PIMYILAAFIPGVMIAGLYFF). The Extracellular segment spans residues 313 to 332 (DHSVASQMAQQKEFNLKNPS). Residues 333–353 (AYHYDIFLLGIITLICGLLGL) form a helical membrane-spanning segment. The Cytoplasmic portion of the chain corresponds to 354 to 469 (PPSNGVLPQA…EQRVSNLLQS (116 aa)). Residues 470 to 490 (VLVGLTLLAVTVIKMIPSSVL) traverse the membrane as a helical segment. At 491–557 (WGYFAYMAID…QLVYFLLCYG (67 aa)) the chain is on the extracellular side. A helical membrane pass occupies residues 558–578 (MTWIPMAGIFFPALFFLLISI). At 579–671 (REHLLPKLFD…EEKHVTFEPH (93 aa)) the chain is on the cytoplasmic side.

It belongs to the anion exchanger (TC 2.A.31.3) family.

It localises to the membrane. Its function is as follows. Probable boron transporter. Boron is essential for maintaining the integrity of plants cell walls. This is Probable boron transporter 6 (BOR6) from Arabidopsis thaliana (Mouse-ear cress).